Reading from the N-terminus, the 261-residue chain is 3-methyl-2-oxobutanoate hydroxymethyltransferase (261 aa).

Residues Asp47 and Asp86 each coordinate Mg(2+). 3-methyl-2-oxobutanoate contacts are provided by residues 47–48 (DS), Asp86, and Lys116. Glu118 lines the Mg(2+) pocket. Glu186 functions as the Proton acceptor in the catalytic mechanism.

It belongs to the PanB family. In terms of assembly, homodecamer; pentamer of dimers. Mg(2+) serves as cofactor.

Its subcellular location is the cytoplasm. It catalyses the reaction 3-methyl-2-oxobutanoate + (6R)-5,10-methylene-5,6,7,8-tetrahydrofolate + H2O = 2-dehydropantoate + (6S)-5,6,7,8-tetrahydrofolate. Its pathway is cofactor biosynthesis; (R)-pantothenate biosynthesis; (R)-pantoate from 3-methyl-2-oxobutanoate: step 1/2. Its function is as follows. Catalyzes the reversible reaction in which hydroxymethyl group from 5,10-methylenetetrahydrofolate is transferred onto alpha-ketoisovalerate to form ketopantoate. The protein is 3-methyl-2-oxobutanoate hydroxymethyltransferase of Thermosynechococcus vestitus (strain NIES-2133 / IAM M-273 / BP-1).